The following is a 64-amino-acid chain: Small ribosomal subunit protein bS21 (64 aa).

A disordered region spans residues 37 to 64; it reads EKPSVKRKRKEKEAQRRLRKKMRMMKKA. Residues 53-64 are compositionally biased toward basic residues; sequence RLRKKMRMMKKA.

It belongs to the bacterial ribosomal protein bS21 family.

The protein is Small ribosomal subunit protein bS21 of Syntrophotalea carbinolica (strain DSM 2380 / NBRC 103641 / GraBd1) (Pelobacter carbinolicus).